The chain runs to 403 residues: Tryptophan synthase beta chain 1 (403 aa).

Position 96 is an N6-(pyridoxal phosphate)lysine (Lys-96).

Belongs to the TrpB family. In terms of assembly, tetramer of two alpha and two beta chains. Pyridoxal 5'-phosphate is required as a cofactor.

The enzyme catalyses (1S,2R)-1-C-(indol-3-yl)glycerol 3-phosphate + L-serine = D-glyceraldehyde 3-phosphate + L-tryptophan + H2O. It participates in amino-acid biosynthesis; L-tryptophan biosynthesis; L-tryptophan from chorismate: step 5/5. The beta subunit is responsible for the synthesis of L-tryptophan from indole and L-serine. In Wolinella succinogenes (strain ATCC 29543 / DSM 1740 / CCUG 13145 / JCM 31913 / LMG 7466 / NCTC 11488 / FDC 602W) (Vibrio succinogenes), this protein is Tryptophan synthase beta chain 1 (trpB1).